A 133-amino-acid chain; its full sequence is Basic phospholipase A2 beta-bungarotoxin A-AL2 chain (133 aa).

A signal peptide spans 1–5 (FLLGA). Positions 6 to 13 (ANIPPHPL) are excised as a propeptide. 6 disulfide bridges follow: C40-C132, C42-C58, C57-C113, C64-C106, C74-C99, and C92-C104. 3 residues coordinate Ca(2+): Y41, G43, and G45. The active site involves H61. Residue D62 coordinates Ca(2+). Residue D107 is part of the active site.

This sequence belongs to the phospholipase A2 family. Group I subfamily. D49 sub-subfamily. Heterodimer; disulfide-linked. The A chains have phospholipase A2 activity and the B chains show homology with the basic protease inhibitors. Ca(2+) is required as a cofactor. Expressed by the venom gland.

It localises to the secreted. It catalyses the reaction a 1,2-diacyl-sn-glycero-3-phosphocholine + H2O = a 1-acyl-sn-glycero-3-phosphocholine + a fatty acid + H(+). Functionally, snake venom phospholipase A2 (PLA2) that inhibits neuromuscular transmission by blocking acetylcholine release from the nerve termini. PLA2 catalyzes the calcium-dependent hydrolysis of the 2-acyl groups in 3-sn-phosphoglycerides. The polypeptide is Basic phospholipase A2 beta-bungarotoxin A-AL2 chain (Bungarus multicinctus (Many-banded krait)).